Reading from the N-terminus, the 208-residue chain is Probable GTP-binding protein EngB (208 aa).

One can recognise an EngB-type G domain in the interval 18-187; that stretch reads KQFEICVIGR…FALMKKVVIQ (170 aa). Residues 26–33, 52–56, 69–72, 135–138, and 166–168 contribute to the GTP site; these read GRSNVGKS, GRTQL, DLPG, NKLD, and VSA. Mg(2+) contacts are provided by Ser-33 and Thr-54.

It belongs to the TRAFAC class TrmE-Era-EngA-EngB-Septin-like GTPase superfamily. EngB GTPase family. The cofactor is Mg(2+).

Necessary for normal cell division and for the maintenance of normal septation. The chain is Probable GTP-binding protein EngB from Ureaplasma parvum serovar 3 (strain ATCC 27815 / 27 / NCTC 11736).